A 157-amino-acid chain; its full sequence is Protein-export protein SecB (157 aa).

Belongs to the SecB family. Homotetramer, a dimer of dimers. One homotetramer interacts with 1 SecA dimer.

The protein resides in the cytoplasm. In terms of biological role, one of the proteins required for the normal export of preproteins out of the cell cytoplasm. It is a molecular chaperone that binds to a subset of precursor proteins, maintaining them in a translocation-competent state. It also specifically binds to its receptor SecA. This Shewanella oneidensis (strain ATCC 700550 / JCM 31522 / CIP 106686 / LMG 19005 / NCIMB 14063 / MR-1) protein is Protein-export protein SecB.